Consider the following 231-residue polypeptide: NADH-ubiquinone oxidoreductase chain 4 (231 aa).

Helical transmembrane passes span 1–21, 34–54, 63–85, 89–111, 128–148, 156–176, and 211–231; these read PIAGSMVLAAILLKLGGYGII, LFLPFIVLALWGAILANLTCL, IAYSSISHMGLVVAAIIIQTPWG, AMALMIAHGFTSSALFCLANTTY, ILPMATTWWLVTNLMNIAIPP, LLIMSALFNWCPTTIIMLGLS, and LLIALHLAPLLMISLKPELVI.

Belongs to the complex I subunit 4 family.

Its subcellular location is the mitochondrion membrane. It catalyses the reaction a ubiquinone + NADH + 5 H(+)(in) = a ubiquinol + NAD(+) + 4 H(+)(out). In terms of biological role, core subunit of the mitochondrial membrane respiratory chain NADH dehydrogenase (Complex I) that is believed to belong to the minimal assembly required for catalysis. Complex I functions in the transfer of electrons from NADH to the respiratory chain. The immediate electron acceptor for the enzyme is believed to be ubiquinone. This Crotalus adamanteus (Eastern diamondback rattlesnake) protein is NADH-ubiquinone oxidoreductase chain 4 (MT-ND4).